A 163-amino-acid chain; its full sequence is Nucleotide-binding protein HD_0358 (163 aa).

The protein belongs to the YajQ family.

Nucleotide-binding protein. This chain is Nucleotide-binding protein HD_0358, found in Haemophilus ducreyi (strain 35000HP / ATCC 700724).